Reading from the N-terminus, the 696-residue chain is MRRRSLALRLLLALLLLPPPLPQTLLGAPCPEPCSCRPDGALRCPGPRAGLSRLSLTYLPIKVIPSQAFRGLNEVVKIEISQSDSLEKIEANAFDNLLNLSEILIQNTKNLVYIEPGAFTNLPRLKYLSICNTGIRKLPDVTKIFSSEFNFILEICDNLHITTVPANAFQGMNNESITLKLYGNGFEEIQSHAFNGTTLISLELKENAHLKKMHNDAFRGARGPSILDISSTKLQALPSYGLESIQTLIATSSYSLKKLPSREKFTNLLDATLTYPSHCCAFRNLPTKEQNFSFSIFKNFSKQCESTARRPNNETLYSAIFAESELSDWDYDYGFCSPKTLQCAPEPDAFNPCEDIMGYDFLRVLIWLINILAIMGNVTVLFVLLTSHYKLTVPRFLMCNLSFADFCMGLYLLLIASVDAQTKGQYYNHAIDWQTGNGCSVAGFFTVFASELSVYTLTVITLERWHTITYAIQLDQKLRLRHAIPIMLGGWLFSTLIAMLPLVGVSSYMKVSICLPMDVETTLSQVYILTILILNVVAFIIICACYIKIYFAVQNPELMATNKDTKIAKKMAVLIFTDFTCMAPISFFAISAALKVPLITVTNSKVLLVLFYPVNSCANPFLYAIFTKAFRRDFFLLLSKSGCCKHQAELYRRKDFSAYCKNGFTGSNKPSRSTLKLTTLQCQYSTVMDKTCYKDC.

Residues 1-27 (MRRRSLALRLLLALLLLPPPLPQTLLG) form the signal peptide. Over 28 to 358 (APCPEPCSCR…AFNPCEDIMG (331 aa)) the chain is Extracellular. The N-linked (GlcNAc...) asparagine glycan is linked to Asn99. LRR repeat units follow at residues 122–147 (LPRL…IFSS), 149–171 (FNFI…AFQG), 172–196 (MNNE…AFNG), 198–220 (TLIS…AFRG), 221–244 (ARGP…GLES), and 250–271 (ATSS…LLDA). Residues Asn174 and Asn195 are each glycosylated (N-linked (GlcNAc...) asparagine). N-linked (GlcNAc...) asparagine glycosylation is found at Asn291, Asn299, and Asn313. Position 331 is a sulfotyrosine (Tyr331). Residues 359–386 (YDFLRVLIWLINILAIMGNVTVLFVLLT) traverse the membrane as a helical segment. Topologically, residues 387 to 395 (SHYKLTVPR) are cytoplasmic. The chain crosses the membrane as a helical span at residues 396–418 (FLMCNLSFADFCMGLYLLLIASV). Residues 419-439 (DAQTKGQYYNHAIDWQTGNGC) lie on the Extracellular side of the membrane. A disulfide bridge connects residues Cys439 and Cys514. Residues 440 to 462 (SVAGFFTVFASELSVYTLTVITL) form a helical membrane-spanning segment. The Cytoplasmic segment spans residues 463 to 482 (ERWHTITYAIQLDQKLRLRH). The chain crosses the membrane as a helical span at residues 483 to 505 (AIPIMLGGWLFSTLIAMLPLVGV). Over 506–525 (SSYMKVSICLPMDVETTLSQ) the chain is Extracellular. A helical transmembrane segment spans residues 526–547 (VYILTILILNVVAFIIICACYI). At 548–570 (KIYFAVQNPELMATNKDTKIAKK) the chain is on the cytoplasmic side. Residues 571-594 (MAVLIFTDFTCMAPISFFAISAAL) traverse the membrane as a helical segment. Residues 595-605 (KVPLITVTNSK) are Extracellular-facing. A helical membrane pass occupies residues 606–626 (VLLVLFYPVNSCANPFLYAIF). The Cytoplasmic segment spans residues 627 to 696 (TKAFRRDFFL…VMDKTCYKDC (70 aa)). 2 S-palmitoyl cysteine lipidation sites follow: Cys643 and Cys644.

This sequence belongs to the G-protein coupled receptor 1 family. FSH/LSH/TSH subfamily. In terms of processing, sulfated.

Its subcellular location is the cell membrane. Receptor for lutropin-choriogonadotropic hormone. The activity of this receptor is mediated by G proteins which activate adenylate cyclase. The sequence is that of Lutropin-choriogonadotropic hormone receptor (LHCGR) from Sus scrofa (Pig).